The following is a 447-amino-acid chain: MTRTVHVIGGGLAGSEAAWQLAQADIPVILHEMRPVRTTPAHQTDGLAELVCSNSLRSDDADYNAVGLLHEEMRRAGSLILAQADAHKVPAGGALAVDRDGFSQGVQAALAGHPRITILREEVAGLPPEDWEQVVIATGPLTSPAMAEALRGMTGEDSLAFFDAIAPIVTKDSIDFGKAWFQSRYDKGTGSDYINCPLDREQYNTFIDALITGEKVDFHEWEKDTPYFEGCLPIEVMAERGKDTLAYGPMKPVGLTNPNGPKPFAVVQLRQDNALGTLYNLVGFQTKLRHGEQARIFRAIPGLENAEFARLGGLHRNTFINGPRVLDRTLRLKAQPRLRLAGQVTGCEGYVESSAIGLLAGLFAAAEALGRDMLRPPATTALGALLNHVTGDAEAETYQPMNINFGLFPPPPERDERGRRVKGRDRKKLYAQRAREALTPWLNTIRE.

9–14 (GGGLAG) contributes to the FAD binding site.

The protein belongs to the MnmG family. TrmFO subfamily. It depends on FAD as a cofactor.

The protein resides in the cytoplasm. The catalysed reaction is uridine(54) in tRNA + (6R)-5,10-methylene-5,6,7,8-tetrahydrofolate + NADH + H(+) = 5-methyluridine(54) in tRNA + (6S)-5,6,7,8-tetrahydrofolate + NAD(+). It carries out the reaction uridine(54) in tRNA + (6R)-5,10-methylene-5,6,7,8-tetrahydrofolate + NADPH + H(+) = 5-methyluridine(54) in tRNA + (6S)-5,6,7,8-tetrahydrofolate + NADP(+). Functionally, catalyzes the folate-dependent formation of 5-methyl-uridine at position 54 (M-5-U54) in all tRNAs. The protein is Methylenetetrahydrofolate--tRNA-(uracil-5-)-methyltransferase TrmFO of Paramagnetospirillum magneticum (strain ATCC 700264 / AMB-1) (Magnetospirillum magneticum).